We begin with the raw amino-acid sequence, 56 residues long: EEGLDFPEYDGVDRVVNVNAKNYKNVFKKYEVLALLYHEPPXXDKASQRQFDMEEL.

At tyrosine 9 the chain carries Phosphotyrosine. Serine 47 bears the Phosphoserine mark.

The protein belongs to the calsequestrin family. As to quaternary structure, monomer; increases in response to a depletion of intracellular calcium. Homodimer. Homotetramer and homopolymer. Can form linear homooligomers. Ca(2+) ions promote oligomerization. Interacts (via C-terminal end and preferentially with the monomeric form) with STIM1; this interaction increases in response to a depletion of intracellular calcium, decreases both STIM1 aggregation and clustering, interaction of STIM1 with ORAI1 and store-operated Ca(2+) entry (SOCE) activity. Interacts with ASPH and TRDN. Post-translationally, N-glycosylated.

The protein resides in the endoplasmic reticulum. Its subcellular location is the sarcoplasmic reticulum. It is found in the sarcoplasmic reticulum lumen. The protein localises to the sarcoplasmic reticulum membrane. It localises to the mitochondrion matrix. Its function is as follows. Calsequestrin is a high-capacity, moderate affinity, calcium-binding protein and thus acts as an internal calcium store in muscle. Calcium ions are bound by clusters of acidic residues at the protein surface, often at the interface between subunits. Can bind around 80 Ca(2+) ions. Regulates the release of lumenal Ca(2+) via the calcium release channel RYR1; this plays an important role in triggering muscle contraction. Negatively regulates store-operated Ca(2+) entry (SOCE) activity. The polypeptide is Calsequestrin-1 (CASQ1) (Canis lupus familiaris (Dog)).